The sequence spans 447 residues: Phosphoglucosamine mutase (447 aa).

The active-site Phosphoserine intermediate is serine 102. Serine 102, aspartate 241, aspartate 243, and aspartate 245 together coordinate Mg(2+). Serine 102 is subject to Phosphoserine.

This sequence belongs to the phosphohexose mutase family. Mg(2+) serves as cofactor. Activated by phosphorylation.

It carries out the reaction alpha-D-glucosamine 1-phosphate = D-glucosamine 6-phosphate. Functionally, catalyzes the conversion of glucosamine-6-phosphate to glucosamine-1-phosphate. This chain is Phosphoglucosamine mutase, found in Hamiltonella defensa subsp. Acyrthosiphon pisum (strain 5AT).